We begin with the raw amino-acid sequence, 815 residues long: Polyribonucleotide nucleotidyltransferase (815 aa).

Mg(2+)-binding residues include D489 and D495. The KH domain maps to 556-615 (PRFYTLQIPTDKIRDLIGPGGKVIRGIVEATGVKIDVEDSGKVNVASSDQEAAKKALKMI). Residues 625-692 (GKTYLGTVTR…DGNRIKLSRK (68 aa)) form the S1 motif domain. The segment at 700–815 (AKMATEGGGD…GGGGGGRGRG (116 aa)) is disordered. The span at 723 to 734 (APGGVTFEGGYE) shows a compositional bias: gly residues. Residues 735-745 (GGDEPEVEEGE) show a composition bias toward acidic residues. Residues 775–815 (PHGGGGGAGRGGRGRRPGGGGGGGRGGHGGRGGGGGGRGRG) show a composition bias toward gly residues.

This sequence belongs to the polyribonucleotide nucleotidyltransferase family. Requires Mg(2+) as cofactor.

It localises to the cytoplasm. The enzyme catalyses RNA(n+1) + phosphate = RNA(n) + a ribonucleoside 5'-diphosphate. In terms of biological role, involved in mRNA degradation. Catalyzes the phosphorolysis of single-stranded polyribonucleotides processively in the 3'- to 5'-direction. This is Polyribonucleotide nucleotidyltransferase from Koribacter versatilis (strain Ellin345).